The chain runs to 257 residues: UPF0246 protein Shal_1126 (257 aa).

This sequence belongs to the UPF0246 family.

The polypeptide is UPF0246 protein Shal_1126 (Shewanella halifaxensis (strain HAW-EB4)).